Consider the following 328-residue polypeptide: D-cysteine desulfhydrase (328 aa).

N6-(pyridoxal phosphate)lysine is present on lysine 51.

The protein belongs to the ACC deaminase/D-cysteine desulfhydrase family. As to quaternary structure, homodimer. It depends on pyridoxal 5'-phosphate as a cofactor.

It catalyses the reaction D-cysteine + H2O = hydrogen sulfide + pyruvate + NH4(+) + H(+). Functionally, catalyzes the alpha,beta-elimination reaction of D-cysteine and of several D-cysteine derivatives. It could be a defense mechanism against D-cysteine. The polypeptide is D-cysteine desulfhydrase (Escherichia coli O7:K1 (strain IAI39 / ExPEC)).